We begin with the raw amino-acid sequence, 477 residues long: Serine/threonine-protein kinase pakC (477 aa).

The region spanning 13 to 108 (SPDKEGELKK…WMKAVEKGSE (96 aa)) is the PH domain. The region spanning 112–125 (VSQPFNLKHEVHVD) is the CRIB domain. Positions 204–458 (YKNMTKIGEG…ATDLLKHPFM (255 aa)) constitute a Protein kinase domain. Residues 210 to 218 (IGEGAAGEV) and Lys-233 each bind ATP. Asp-326 functions as the Proton acceptor in the catalytic mechanism.

The protein belongs to the protein kinase superfamily. STE Ser/Thr protein kinase family. STE20 subfamily. In terms of assembly, interacts with GTP-bound racB. The cofactor is Mg(2+).

It is found in the cytoplasm. The protein resides in the membrane. It carries out the reaction L-seryl-[protein] + ATP = O-phospho-L-seryl-[protein] + ADP + H(+). The enzyme catalyses L-threonyl-[protein] + ATP = O-phospho-L-threonyl-[protein] + ADP + H(+). Its activity is regulated as follows. Kinase activity is rapidly and transiently increased in response to chemoattractant stimulation. Functionally, has role in the regulation of chemotaxis. This Dictyostelium discoideum (Social amoeba) protein is Serine/threonine-protein kinase pakC (pakC).